We begin with the raw amino-acid sequence, 108 residues long: MLKGQLAGLMKQAQAMQDNLKKAQDELALIEVEGQSGAGLVKVLMTCKHDVKRITIDPSLLADDKDMLEDLVAAAFNDAVRRAAATSEEKMGKLTAGMPLPPGMKLPF.

Residues 86–108 (TSEEKMGKLTAGMPLPPGMKLPF) form a disordered region. Residues 99–108 (PLPPGMKLPF) are compositionally biased toward pro residues.

Belongs to the YbaB/EbfC family. As to quaternary structure, homodimer.

The protein resides in the cytoplasm. The protein localises to the nucleoid. Functionally, binds to DNA and alters its conformation. May be involved in regulation of gene expression, nucleoid organization and DNA protection. This chain is Nucleoid-associated protein Mpe_A2533, found in Methylibium petroleiphilum (strain ATCC BAA-1232 / LMG 22953 / PM1).